The sequence spans 198 residues: Recombination protein RecR (198 aa).

The C4-type zinc-finger motif lies at 57–72 (CSLCGNLDTVDPCHIC). The Toprim domain occupies 80–175 (GLICVVETVG…TVTRVGHGVP (96 aa)).

This sequence belongs to the RecR family.

In terms of biological role, may play a role in DNA repair. It seems to be involved in an RecBC-independent recombinational process of DNA repair. It may act with RecF and RecO. The chain is Recombination protein RecR from Gluconobacter oxydans (strain 621H) (Gluconobacter suboxydans).